The following is a 639-amino-acid chain: Phosphatidylinositol 3,4,5-trisphosphate 3-phosphatase cnrN (639 aa).

Residues 20–190 enclose the Phosphatase tensin-type domain; sequence FKSKEMDLDL…NYFKEIVSGS (171 aa). Residue C129 is the Phosphocysteine intermediate of the active site. One can recognise a C2 tensin-type domain in the interval 195-350; sequence EFVLTFRSIE…LQMECRFQNN (156 aa). 5 disordered regions span residues 243–265, 395–429, 451–498, 519–567, and 598–628; these read INND…NNNN, NNIL…HSTP, SSSG…SCSS, NNNN…RKRK, and FTKK…DPSE. Low complexity-rich tracts occupy residues 244–265, 395–424, 458–486, and 519–554; these read NNDN…NNNN, NNIL…LPSS, NSSR…SRSS, and NNNN…SNSN. A compositionally biased stretch (polar residues) spans 598–608; the sequence is FTKKINPNNNE. Over residues 619 to 628 the composition is skewed to basic and acidic residues; it reads LKKETNDPSE.

Mg(2+) serves as cofactor.

It catalyses the reaction a 1,2-diacyl-sn-glycero-3-phospho-(1D-myo-inositol-3,4,5-trisphosphate) + H2O = a 1,2-diacyl-sn-glycero-3-phospho-(1D-myo-inositol-4,5-bisphosphate) + phosphate. Functionally, protein phosphatase that negatively regulates PI3K-dependent pathways. Regulates cAMP signal transduction to control territory size. During development, a lawn of Dictyostelium cells breaks up into territories where cells aggregate in dendritic streams to form groups of 20'000 cells. In Dictyostelium discoideum (Social amoeba), this protein is Phosphatidylinositol 3,4,5-trisphosphate 3-phosphatase cnrN (cnrN).